A 1157-amino-acid chain; its full sequence is Folliculin-interacting protein 1 (1157 aa).

The uDENN FNIP1/2-type domain occupies 37–467; it reads FDPSQIRLIV…TVMPNGQPPI (431 aa). Disordered stretches follow at residues 92 to 120, 616 to 665, 769 to 796, and 904 to 955; these read PGGD…CPKY, SQQE…TKVE, SPPT…NRDC, and VPHG…NYYG. A compositionally biased stretch (low complexity) spans 95–111; that stretch reads DSSSSLDSSINSSSSFS. Residues 475–1083 form the cDENN FNIP1/2-type domain; that stretch reads SSQSVDMLAK…VSNLLHSTLQ (609 aa). The segment covering 651–664 has biased composition (basic and acidic residues); sequence ADGHQPRTCQDTKV. The segment covering 904 to 916 has biased composition (basic and acidic residues); that stretch reads VPHGDRENAEKKV. The dDENN FNIP1/2-type domain maps to 1093–1148; it reads FCVMHLEDRLQELYFKSKMLSEYLKGQMRVHVKELGVVLGIESSDLPLLAAVASTH.

It belongs to the FNIP family. As to quaternary structure, homodimer and homomultimer. Heterodimer and heteromultimer with FNIP2. Component of the lysosomal folliculin complex (LFC).

The protein localises to the lysosome membrane. It is found in the cytoplasm. Its subcellular location is the cytosol. Its function is as follows. Binding partner of the GTPase-activating protein FLCN: involved in the cellular response to amino acid availability by regulating the non-canonical mTORC1 signaling cascade controlling the MiT/TFE factors TFEB and TFE3. Required to promote FLCN recruitment to lysosomes and interaction with Rag GTPases, leading to activation of the non-canonical mTORC1 signaling. In low-amino acid conditions, component of the lysosomal folliculin complex (LFC) on the membrane of lysosomes, which inhibits the GTPase-activating activity of FLCN, thereby inactivating mTORC1 and promoting nuclear translocation of TFEB and TFE3. Upon amino acid restimulation, disassembly of the LFC complex liberates the GTPase-activating activity of FLCN, leading to activation of mTORC1 and subsequent inactivation of TFEB and TFE3. In addition to its role in mTORC1 signaling, also acts as a co-chaperone of HSP90AA1/Hsp90: inhibits the ATPase activity of HSP90AA1/Hsp90, leading to activate both kinase and non-kinase client proteins of HSP90AA1/Hsp90. Acts as a scaffold to load client protein FLCN onto HSP90AA1/Hsp90. The polypeptide is Folliculin-interacting protein 1 (Gallus gallus (Chicken)).